The primary structure comprises 652 residues: Probable protein phosphatase 2C 19 (652 aa).

Residues 265–517 (KYVVSSMQGW…DNTTVILVLF (253 aa)) enclose the PPM-type phosphatase domain. 4 residues coordinate Mn(2+): D300, G301, E467, and D508. The segment at 524-567 (AVPPVDTDTDTDSHTGDDVDNNDPANEVDPTANAGSDDSNTSDE) is disordered.

Belongs to the PP2C family. Requires Mg(2+) as cofactor. Mn(2+) is required as a cofactor.

It catalyses the reaction O-phospho-L-seryl-[protein] + H2O = L-seryl-[protein] + phosphate. The catalysed reaction is O-phospho-L-threonyl-[protein] + H2O = L-threonyl-[protein] + phosphate. This Oryza sativa subsp. japonica (Rice) protein is Probable protein phosphatase 2C 19.